The following is a 203-amino-acid chain: Small ribosomal subunit protein uS4c (203 aa).

In terms of domain architecture, S4 RNA-binding spans 92-150 (MRLDNIIYRLGMAPTIANARQLVNHGHIVVNDRIVTIPSYRCKPKDIISVRNNSTSRNV).

Belongs to the universal ribosomal protein uS4 family. Part of the 30S ribosomal subunit. Contacts protein S5. The interaction surface between S4 and S5 is involved in control of translational fidelity.

It localises to the plastid. The protein localises to the chloroplast. In terms of biological role, one of the primary rRNA binding proteins, it binds directly to 16S rRNA where it nucleates assembly of the body of the 30S subunit. With S5 and S12 plays an important role in translational accuracy. The sequence is that of Small ribosomal subunit protein uS4c (rps4) from Chlorokybus atmophyticus (Soil alga).